Here is a 349-residue protein sequence, read N- to C-terminus: Hydroxymethylglutaryl-CoA synthase (349 aa).

(3S)-3-hydroxy-3-methylglutaryl-CoA is bound by residues Asp29 and Ala30. The active-site Proton donor/acceptor is the Glu81. Residues Cys113 and Thr154 each coordinate (3S)-3-hydroxy-3-methylglutaryl-CoA. Cys113 acts as the Acyl-thioester intermediate in catalysis. Arg202 is a binding site for CoA. 2 residues coordinate (3S)-3-hydroxy-3-methylglutaryl-CoA: Thr204 and His237. His237 acts as the Proton donor/acceptor in catalysis. Lys242 is a CoA binding site. Residues Lys246, Asn269, and Ser299 each coordinate (3S)-3-hydroxy-3-methylglutaryl-CoA.

It belongs to the thiolase-like superfamily. Archaeal HMG-CoA synthase family. Interacts with acetoacetyl-CoA thiolase that catalyzes the precedent step in the pathway and with a DUF35 protein. The acetoacetyl-CoA thiolase/HMG-CoA synthase complex channels the intermediate via a fused CoA-binding site, which allows for efficient coupling of the endergonic thiolase reaction with the exergonic HMGCS reaction.

The enzyme catalyses acetoacetyl-CoA + acetyl-CoA + H2O = (3S)-3-hydroxy-3-methylglutaryl-CoA + CoA + H(+). The protein operates within metabolic intermediate biosynthesis; (R)-mevalonate biosynthesis; (R)-mevalonate from acetyl-CoA: step 2/3. In terms of biological role, catalyzes the condensation of acetyl-CoA with acetoacetyl-CoA to form 3-hydroxy-3-methylglutaryl-CoA (HMG-CoA). Functions in the mevalonate (MVA) pathway leading to isopentenyl diphosphate (IPP), a key precursor for the biosynthesis of isoprenoid compounds that are building blocks of archaeal membrane lipids. This is Hydroxymethylglutaryl-CoA synthase from Methanosarcina acetivorans (strain ATCC 35395 / DSM 2834 / JCM 12185 / C2A).